Here is a 963-residue protein sequence, read N- to C-terminus: Seizure 6-like protein (963 aa).

The signal sequence occupies residues 1–31; it reads MPVARPQAAGPDRISLFLVAFLLGSPAAAQA. Disordered stretches follow at residues 28–63, 116–150, and 164–204; these read AAQAEDGGPEGEMHPSTAYLLPSASLESSLEEGVTS, RPLATPTTLQRLGSPASATTKLREPEDPEQPTAPA, and LPHS…TTTS. The Extracellular portion of the chain corresponds to 32-897; sequence EDGGPEGEMH…ESSLEGGNMA (866 aa). Residues 47–59 are compositionally biased toward low complexity; sequence LLPSASLESSLEE. Positions 120-135 are enriched in polar residues; it reads TPTTLQRLGSPASATT. Residues 191–204 show a composition bias toward low complexity; the sequence is TGSASEESQETTTS. Residues cysteine 221 and cysteine 248 are joined by a disulfide bond. Residues 221–329 enclose the CUB 1 domain; sequence CGVSFSDPEG…GTFQLHYQAF (109 aa). Asparagine 251, asparagine 268, and asparagine 290 each carry an N-linked (GlcNAc...) asparagine glycan. Positions 331–390 constitute a Sushi 1 domain; it reads LSCPFPRRPDAGEVTVMDLHSGGVAHFHCHLGYELQGAKTLTCINASKPHWSSQEPVCSA. Cystine bridges form between cysteine 333–cysteine 373, cysteine 359–cysteine 388, and cysteine 392–cysteine 419. Residues asparagine 375, asparagine 398, asparagine 414, asparagine 454, asparagine 516, and asparagine 558 are each glycosylated (N-linked (GlcNAc...) asparagine). Positions 392–502 constitute a CUB 2 domain; that stretch reads CGGAVHNATI…SAFNIRFEAF (111 aa). The Sushi 2 domain maps to 505–566; the sequence is GHCYEPYIQN…WNDTEPLCRA (62 aa). Cystine bridges form between cysteine 507–cysteine 549, cysteine 534–cysteine 564, and cysteine 568–cysteine 594. A CUB 3 domain is found at 568 to 679; sequence CGGELSAVAG…QGFIMNYIEV (112 aa). 2 N-linked (GlcNAc...) asparagine glycosylation sites follow: asparagine 614 and asparagine 682. 3 Sushi domains span residues 683–742, 744–807, and 811–872; these read DSCS…FCEK, MYCT…HCVS, and LACD…ICKV. Disulfide bonds link cysteine 685–cysteine 727, cysteine 713–cysteine 740, cysteine 746–cysteine 788, cysteine 774–cysteine 805, cysteine 813–cysteine 855, and cysteine 841–cysteine 870. The chain crosses the membrane as a helical span at residues 898–918; it reads LAIFIPVLLISLLLGGAYIYV. Residues 919-963 lie on the Cytoplasmic side of the membrane; sequence TRCRQYSSLRLPLMYSHPYSQITVETEFDNPIYETGETREYEVSI.

It belongs to the SEZ6 family. Expressed exclusively in the brain, predominantly in neurons. Wide expression in the gray matter of the brain with high levels in the olfactory bulb, anterior olfactory nuclei, hippocampal formation and cerebellar cortex. Detected diffusely and weakly in the white matter, such as the corpus callosum and cerebellar medulla. In the cerebellar cortex, intensely expressed in Purkinje cells and granule cells. Detected also in interneurons in the molecular layer.

It localises to the cell membrane. The protein localises to the endoplasmic reticulum membrane. Its function is as follows. Candidate tumor suppressor gene. May contribute to specialized endoplasmic reticulum functions in neurons. The sequence is that of Seizure 6-like protein (Sez6l) from Mus musculus (Mouse).